Reading from the N-terminus, the 283-residue chain is Aspartate dehydrogenase domain-containing protein (283 aa).

Residues Ser20 and Ser168 each carry the phosphoserine modification.

It belongs to the L-aspartate dehydrogenase family.

The chain is Aspartate dehydrogenase domain-containing protein from Homo sapiens (Human).